Reading from the N-terminus, the 90-residue chain is Small ribosomal subunit protein bS18 (90 aa).

The protein belongs to the bacterial ribosomal protein bS18 family. In terms of assembly, part of the 30S ribosomal subunit. Forms a tight heterodimer with protein bS6.

Functionally, binds as a heterodimer with protein bS6 to the central domain of the 16S rRNA, where it helps stabilize the platform of the 30S subunit. The polypeptide is Small ribosomal subunit protein bS18 (Bacteroides thetaiotaomicron (strain ATCC 29148 / DSM 2079 / JCM 5827 / CCUG 10774 / NCTC 10582 / VPI-5482 / E50)).